The primary structure comprises 499 residues: Glucose-6-phosphate isomerase (499 aa).

Catalysis depends on Glu352, which acts as the Proton donor. Active-site residues include His383 and Lys487.

The protein belongs to the GPI family.

The protein localises to the cytoplasm. It catalyses the reaction alpha-D-glucose 6-phosphate = beta-D-fructose 6-phosphate. Its pathway is carbohydrate biosynthesis; gluconeogenesis. It participates in carbohydrate degradation; glycolysis; D-glyceraldehyde 3-phosphate and glycerone phosphate from D-glucose: step 2/4. Catalyzes the reversible isomerization of glucose-6-phosphate to fructose-6-phosphate. This chain is Glucose-6-phosphate isomerase, found in Legionella pneumophila (strain Lens).